The following is a 208-amino-acid chain: Thioredoxin domain-containing protein 9 (208 aa).

In terms of domain architecture, Thioredoxin spans Tyr-68 to Val-179.

In terms of tissue distribution, expressed throughout the body with high expression in the nervous system, including the ventral nerve cord and tail neurons, and vulva.

The protein resides in the nucleus. It is found in the cytoplasm. Functionally, required for normal microtubule organization and function. Regulates tubulin acetylation in ALM and PLM neurons. The polypeptide is Thioredoxin domain-containing protein 9 (Caenorhabditis elegans).